We begin with the raw amino-acid sequence, 243 residues long: VQ motif-containing protein 33 (243 aa).

Residues 1 to 16 show a composition bias toward polar residues; it reads MEVSTSSMSSKPEQMQ. The disordered stretch occupies residues 1-49; that stretch reads MEVSTSSMSSKPEQMQNPPPMISSPRFQPQIISPHHHDQHQHLSNPYPT. The short motif at 59 to 68 is the VQ element; the sequence is FKQVVQMLTG. Disordered stretches follow at residues 69–98 and 138–162; these read SSTDTTTGKHHEAPSPVNNNNKGSSFSIPP and FTGGNSSHHQSPRFSPRNSSSSENI. Residues Ser83 and Ser95 each carry the phosphoserine modification. Residues 84–98 show a composition bias toward polar residues; that stretch reads PVNNNNKGSSFSIPP. Phosphothreonine is present on Thr139. Residues Ser148, Ser152, Ser165, Ser167, and Ser178 each carry the phosphoserine modification. Positions 149–162 are enriched in low complexity; sequence PRFSPRNSSSSENI. Residues 180-243 are disordered; it reads VTPLRSNDDP…FPVASPARNS (64 aa). Phosphothreonine is present on Thr181. Polar residues predominate over residues 191-201; sequence NKSSPLSLGNS. 2 positions are modified to phosphoserine: Ser218 and Ser221. Position 222 is a phosphothreonine (Thr222). Ser238 carries the phosphoserine modification.

Post-translationally, phosphorylated on serine and threonine residues by MPK6.

The protein localises to the nucleus. In terms of biological role, may modulate WRKY transcription factor activities. The chain is VQ motif-containing protein 33 from Arabidopsis thaliana (Mouse-ear cress).